Consider the following 422-residue polypeptide: Zinc finger protein Gfi-1 (422 aa).

The tract at residues 1-20 is SNAG domain; that stretch reads MPRSFLVKSKKAHSYHQPRS. The segment at 1 to 109 is disordered; sequence MPRSFLVKSK…ASEKSMCPSL (109 aa). Residues S20 and S56 each carry the phosphoserine modification. The interval 140 to 257 is required for interaction with RELA; the sequence is RPCGALERGA…LLLGGGSYKC (118 aa). 6 consecutive C2H2-type zinc fingers follow at residues 255-278, 284-306, 312-334, 340-362, 368-390, and 396-419; these read YKCI…RRSH, FACE…KAVH, FDCK…LLIH, YPCQ…TFIH, HKCQ…SRKH, and FGCD…ETQH.

In terms of assembly, interacts with U2AF1L4. Component of RCOR-GFI-KDM1A-HDAC complexes. Interacts directly with RCOR1, KDM1A and HDAC2. Also interacts with HDAC1. Interacts (via the zinc-finger domain) with ARIH2; the interaction prevents GFI1 ubiquitination and proteasomal degradation. Interacts with PIAS3; the interaction relieves the inhibitory effect of PIAS3 on STAT3-mediated transcriptional activity. Forms a complex with EHMT2 and HDAC1 to promote 'Lys-9' dimethylation of H3 (H3K9Me2) and repress expression of target genes. Interacts directly with EHMT2. Component of the GFI1-AJUBA-HDAC1 repressor complex. Interacts directly with AJUBA (via ITS LIM domains); the interaction results in the HDAC-dependent corepression of a subset of GFI1 target genes and, occurs independently of the SNAG domain. Interacts with SPI1; the interaction inhibits SPI1 transcriptional activity targeted at macrophage-specific genes, repressing macrophage differentiation of myeloid progenitor cells and promoting granulocyte commitment. Interacts with RUNX1T1; the interaction represses HDAC-mediated transcriptional activity. Interacts with RELA; the interaction occurs on liposaccharide (LPS) stimulation and controls RELA DNA binding activity and regulates endotoxin-mediated TOLL-like receptor inflammatory response. Interacts (via the C-terminal zinc fingers) with ZBTB17; the interaction results in the recruitment of GFI1 to the CDKN1A/p21 and CDKN1B promoters and repression of transcription. Ubiquitinated. Ubiquitination and degradation by the proteasome is inhibited by the ubiquitin ligase, ARIH2.

It is found in the nucleus. Its function is as follows. Transcription repressor essential for hematopoiesis. Functions in a cell-context and development-specific manner. Binds to 5'-TAAATCAC[AT]GCA-3' in the promoter region of a large number of genes. Component of several complexes, including the EHMT2-GFI1-HDAC1, AJUBA-GFI1-HDAC1 and RCOR-GFI-KDM1A-HDAC complexes, that suppress, via histone deacetylase (HDAC) recruitment, a number of genes implicated in multilineage blood cell development. Regulates neutrophil differentiation, promotes proliferation of lymphoid cells, and is required for granulocyte development. Inhibits SPI1 transcriptional activity at macrophage-specific genes, repressing macrophage differentiation of myeloid progenitor cells and promoting granulocyte commitment. Mediates, together with U2AF1L4, the alternative splicing of CD45 and controls T-cell receptor signaling. Regulates the endotoxin-mediated Toll-like receptor (TLR) inflammatory response by antagonizing RELA. Cooperates with CBFA2T2 to regulate ITGB1-dependent neurite growth. Controls cell-cycle progression by repressing CDKNIA/p21 transcription in response to TGFB1 via recruitment of GFI1 by ZBTB17 to the CDKNIA/p21 and CDKNIB promoters. Required for the maintenance of inner ear hair cells. In addition to its role in transcription, acts as a substrate adapter for PRMT1 in the DNA damage response: facilitates the recognition of TP53BP1 and MRE11 substrates by PRMT1, promoting their methylation and the DNA damage response. The polypeptide is Zinc finger protein Gfi-1 (GFI1) (Homo sapiens (Human)).